We begin with the raw amino-acid sequence, 292 residues long: MSGGLDMSLDDIIKSNRKPTGSRGRGGIGGGNNTGGRGGSGSNSGPSRRFANRVGARTAPYSRPIQQQQAHDAMWQNDVFATDASVAAAFGHHQTAVVGGGSSIETGTKLYISNLDYGVSNEDIKELFSEVGDLKRYGIHYDRSGRSKGTAEVVFSRRGDALAAVKRYNNVQLDGKLMKIEIVGTNLSAPALPILATAQIPFPTNGILGNFNENFNGNFNGNFNGNFRGRGRGGFMGRPRGGGFGGGNFRGGRGARGRGGRGSGGRGRDENVSAEDLDAELDKYHKEAMETS.

Residues 1-50 (MSGGLDMSLDDIIKSNRKPTGSRGRGGIGGGNNTGGRGGSGSNSGPSRRF) are disordered. N-acetylserine is present on S2. Residues 23–42 (RGRGGIGGGNNTGGRGGSGS) are compositionally biased toward gly residues. The RRM domain maps to 108–185 (TKLYISNLDY…KLMKIEIVGT (78 aa)). Over residues 241-252 (GGGFGGGNFRGG) the composition is skewed to gly residues. The tract at residues 241–292 (GGGFGGGNFRGGRGARGRGGRGSGGRGRDENVSAEDLDAELDKYHKEAMETS) is disordered. The segment covering 280–292 (ELDKYHKEAMETS) has biased composition (basic and acidic residues).

It belongs to the ALYREF family. As to quaternary structure, interacts with RH15 and RH56.

It localises to the nucleus. It is found in the nucleoplasm. Functionally, export adapter involved in nuclear export of spliced and unspliced mRNA. The protein is THO complex subunit 4B (ALY2) of Arabidopsis thaliana (Mouse-ear cress).